The primary structure comprises 138 residues: Spermatid nuclear transition protein 4 (138 aa).

Over residues 1-11 (AKVSRKPREPR) the composition is skewed to basic and acidic residues. The segment at 1-138 (AKVSRKPREP…QGVTRRGRRY (138 aa)) is disordered. S4 carries the post-translational modification Phosphoserine; by PKC. Positions 5–23 (RKPREPRTAVTQSTRRIKR) match the Nuclear localization signal motif. 3 stretches are compositionally biased toward basic residues: residues 19 to 34 (RRIK…RSRG), 43 to 57 (MKIK…RRKI), and 65 to 74 (KKAKKARKHF). T26 is modified (phosphothreonine; by PKA). Residues 54-72 (RRKIQTSAGQPKKAKKARK) carry the Nuclear localization signal motif. Over residues 86 to 101 (NKKTNQNKRQNQNKRQ) the composition is skewed to low complexity. The segment covering 120-131 (PTTSCKWCSQGV) has biased composition (polar residues).

The protein resides in the nucleus. It is found in the chromosome. Involved in nuclear basic protein transition: histones are replaced by spermatid specific proteins which are themselves replaced by protamines in late spermatids. In Sus scrofa (Pig), this protein is Spermatid nuclear transition protein 4 (TNP4).